A 407-amino-acid polypeptide reads, in one-letter code: Resuscitation-promoting factor RpfA (407 aa).

The signal sequence occupies residues 1–33; sequence MSGRHRKPTTSNVSVAKIAFTGAVLGGGGIAMA. 2 disordered regions span residues 142 to 253 and 271 to 371; these read VNGE…ADLA and LPAA…AETP. Residues 148-159 show a composition bias toward pro residues; that stretch reads PLAPPPADPAPP. The segment covering 160–170 has biased composition (low complexity); sequence VELAANDLPAP. The span at 171 to 193 shows a compositional bias: pro residues; it reads LGEPLPAAPADPAPPADLAPPAP. Repeat copies occupy residues 178 to 185 and 186 to 193. Residues 178-359 are 12 X 8 AA approximate repeats of A-P-A-D-L-A-P-P; sequence APADPAPPAD…PDPQPADAPP (182 aa). Residues 194–210 are compositionally biased toward low complexity; the sequence is ADVAPPVELAVNDLPAP. The span at 211–249 shows a compositional bias: pro residues; it reads LGEPLPAAPADPAPPADLAPPAPADLAPPAPADLAPPAP. Tandem repeats lie at residues 218–225, 226–233, 240–247, 248–255, 274–281, 287–294, 295–302, 303–310, 311–318, and 353–359. Residues 274–292 show a composition bias toward low complexity; that stretch reads APAELAPPADLAPASADLA. 2 stretches are compositionally biased toward pro residues: residues 293 to 312 and 350 to 361; these read PPAP…PPAP and PDPQPADAPPPG.

This sequence belongs to the transglycosylase family. Rpf subfamily.

Factor that stimulates resuscitation of dormant cells. Has peptidoglycan (PG) hydrolytic activity. In Mycobacterium tuberculosis (strain CDC 1551 / Oshkosh), this protein is Resuscitation-promoting factor RpfA (rpfA).